Reading from the N-terminus, the 319-residue chain is Lipoyl synthase (319 aa).

The disordered stretch occupies residues 1 to 29 (MVVVVDTVSDKPIRPRHPEKAARPDALSP). Positions 8 to 29 (VSDKPIRPRHPEKAARPDALSP) are enriched in basic and acidic residues. [4Fe-4S] cluster-binding residues include cysteine 61, cysteine 66, cysteine 72, cysteine 87, cysteine 91, cysteine 94, and serine 300. Residues 73–289 (WDRKHATFMI…ESLAYAKGFL (217 aa)) enclose the Radical SAM core domain.

Belongs to the radical SAM superfamily. Lipoyl synthase family. The cofactor is [4Fe-4S] cluster.

It localises to the cytoplasm. The catalysed reaction is [[Fe-S] cluster scaffold protein carrying a second [4Fe-4S](2+) cluster] + N(6)-octanoyl-L-lysyl-[protein] + 2 oxidized [2Fe-2S]-[ferredoxin] + 2 S-adenosyl-L-methionine + 4 H(+) = [[Fe-S] cluster scaffold protein] + N(6)-[(R)-dihydrolipoyl]-L-lysyl-[protein] + 4 Fe(3+) + 2 hydrogen sulfide + 2 5'-deoxyadenosine + 2 L-methionine + 2 reduced [2Fe-2S]-[ferredoxin]. Its pathway is protein modification; protein lipoylation via endogenous pathway; protein N(6)-(lipoyl)lysine from octanoyl-[acyl-carrier-protein]: step 2/2. Its function is as follows. Catalyzes the radical-mediated insertion of two sulfur atoms into the C-6 and C-8 positions of the octanoyl moiety bound to the lipoyl domains of lipoate-dependent enzymes, thereby converting the octanoylated domains into lipoylated derivatives. This Rhodopseudomonas palustris (strain BisA53) protein is Lipoyl synthase.